An 875-amino-acid polypeptide reads, in one-letter code: Acetyl-coenzyme A carboxylase carboxyl transferase subunit alpha, chloroplastic (875 aa).

The transit peptide at 1-50 (MASSSATLVGSTASDLLRSSTTGFTGVPLRTLGRAGLVLKRRDLTVSVTA) directs the protein to the chloroplast. Positions 128-380 (EAKYQKALVE…KIAINEAMDE (253 aa)) constitute a CoA carboxyltransferase C-terminal domain. Positions 664-705 (LLLDKNKAATRKQELKKKSDEHKEAARLEQELKKKFDEVMDT) form a coiled coil. The segment at 845–875 (KEKYENLTRPAGDTLTDDKLREKVGVNRNFS) is disordered. Over residues 860 to 869 (TDDKLREKVG) the composition is skewed to basic and acidic residues.

Belongs to the AccA family. Acetyl-CoA carboxylase is a heterohexamer composed of biotin carboxyl carrier protein, biotin carboxylase and two subunits each of ACCase subunit alpha and ACCase plastid-coded subunit beta (accD).

Its subcellular location is the plastid. It localises to the chloroplast inner membrane. It carries out the reaction N(6)-carboxybiotinyl-L-lysyl-[protein] + acetyl-CoA = N(6)-biotinyl-L-lysyl-[protein] + malonyl-CoA. It functions in the pathway lipid metabolism; malonyl-CoA biosynthesis; malonyl-CoA from acetyl-CoA: step 1/1. Activated by reductants such as dithiothreitol (DTT), and by thioredoxin in vivo, following exposure to light. Component of the acetyl coenzyme A carboxylase (ACC) complex. First, biotin carboxylase catalyzes the carboxylation of biotin on its carrier protein (BCCP) and then the CO(2) group is transferred by the carboxyltransferase to acetyl-CoA to form malonyl-CoA. The polypeptide is Acetyl-coenzyme A carboxylase carboxyl transferase subunit alpha, chloroplastic (ACCA) (Pisum sativum (Garden pea)).